A 499-amino-acid polypeptide reads, in one-letter code: Maturase K (499 aa).

It belongs to the intron maturase 2 family. MatK subfamily.

The protein resides in the plastid. Its subcellular location is the chloroplast. Its function is as follows. Usually encoded in the trnK tRNA gene intron. Probably assists in splicing its own and other chloroplast group II introns. This chain is Maturase K, found in Gleditsia triacanthos (Common honey-locust).